Here is a 625-residue protein sequence, read N- to C-terminus: Zinc finger protein 652-A (625 aa).

The tract at residues 80-255 (FFRDSKPINE…PSDKAKSEEK (176 aa)) is disordered. The segment covering 82 to 100 (RDSKPINEVHSVKGERENS) has biased composition (basic and acidic residues). The segment covering 101 to 127 (GESEEEEDDDDDDDDEDDEEGEEDEDE) has biased composition (acidic residues). Over residues 150-166 (KGDKGVAQDSSHIKTSS) the composition is skewed to basic and acidic residues. Over residues 167–186 (DDEEGDSGEDDQDSHEDEEN) the composition is skewed to acidic residues. Residues 240-255 (PKEPKSPSDKAKSEEK) are compositionally biased toward basic and acidic residues. The C2H2-type 1 zinc-finger motif lies at 258–281 (LTCDKCPRVFNTRWYLEKHMNVTH). The segment at 285-307 (QICDKCGKKFVLESELSLHLQTD) adopts a C2H2-type 2; degenerate zinc-finger fold. 6 consecutive C2H2-type zinc fingers follow at residues 312 to 335 (IQCI…KIVH), 342 to 364 (FSCE…LVAH), 370 to 392 (FTCE…SLQH), 398 to 420 (FRCE…MSIH), 426 to 448 (FMCQ…MKTH), and 454 to 476 (FICE…RRTH). The segment at 482 to 505 (YPCDVCGMRFRFSNMLKAHKEKCF) adopts a C2H2-type 9; degenerate zinc-finger fold.

This sequence belongs to the krueppel C2H2-type zinc-finger protein family.

Its subcellular location is the nucleus. May be involved in transcriptional regulation. In Xenopus laevis (African clawed frog), this protein is Zinc finger protein 652-A (znf652-a).